The primary structure comprises 509 residues: Protein disulfide-isomerase (509 aa).

Residues 1–19 (MLSRALLCLALAWAARVGA) form the signal peptide. A Thioredoxin 1 domain is found at 20–136 (DALEEEDNVL…IVNWLKKRTG (117 aa)). Residues C55 and C58 each act as nucleophile in the active site. Cysteines 55 and 58 form a disulfide. K202 bears the N6-acetyllysine mark. N6-succinyllysine occurs at positions 224 and 273. Residues S333 and S359 each carry the phosphoserine modification. The 143-residue stretch at 335–477 (ELTAEKITQF…FKKFLESGGQ (143 aa)) folds into the Thioredoxin 2 domain. Active-site nucleophile residues include C399 and C402. A disulfide bond links C399 and C402. S429 is subject to Phosphoserine. A Prevents secretion from ER motif is present at residues 506–509 (KDEL).

This sequence belongs to the protein disulfide isomerase family. Heterodimer; heterodimerizes with the protein microsomal triglyceride transfer MTTP. Homodimer. Monomers and homotetramers may also occur. Interacts with P4HA2, forming a heterotetramer consisting of 2 alpha subunits (P4HA2) and 2 beta (P4HB), where P4HB plays the role of a structural subunit; this tetramer catalyzes the formation of 4-hydroxyproline in collagen. Also constitutes the structural subunit of the microsomal triacylglycerol transfer protein MTTP in mammalian cells. Stabilizes both enzymes and retain them in the ER without contributing to the catalytic activity. Binds UBQLN1. Interacts with ERO1B. Interacts with ILDR2. Interacts with ERN1/IRE1A (via N-terminus); the interaction is enhanced by phosphorylation of P4HB by FAM20C in response to endoplasmic reticulum stress and results in attenuation of ERN1 activity. Post-translationally, phosphorylation of Ser-359 by FAM20C is induced by endoplasmic reticulum stress and results in a functional switch from oxidoreductase to molecular chaperone. It also promotes interaction with ERN1.

The protein localises to the endoplasmic reticulum. Its subcellular location is the endoplasmic reticulum lumen. It localises to the melanosome. It is found in the cell membrane. The enzyme catalyses Catalyzes the rearrangement of -S-S- bonds in proteins.. In terms of biological role, this multifunctional protein catalyzes the formation, breakage and rearrangement of disulfide bonds. At the cell surface, seems to act as a reductase that cleaves disulfide bonds of proteins attached to the cell. May therefore cause structural modifications of exofacial proteins. Inside the cell, seems to form/rearrange disulfide bonds of nascent proteins. At high concentrations and following phosphorylation by FAM20C, functions as a chaperone that inhibits aggregation of misfolded proteins. At low concentrations, facilitates aggregation (anti-chaperone activity). May be involved with other chaperones in the structural modification of the TG precursor in hormone biogenesis. Also acts as a structural subunit of various enzymes such as prolyl 4-hydroxylase and microsomal triacylglycerol transfer protein MTTP. Receptor for LGALS9; the interaction retains P4HB at the cell surface of Th2 T helper cells, increasing disulfide reductase activity at the plasma membrane, altering the plasma membrane redox state and enhancing cell migration. This chain is Protein disulfide-isomerase (P4hb), found in Rattus norvegicus (Rat).